The chain runs to 269 residues: SF-assemblin (269 aa).

The tract at residues 1–23 (MSISPGRSFSPMRASGLTGITSA) is disordered. The nonhelical region stretch occupies residues 1–24 (MSISPGRSFSPMRASGLTGITSAG). The tract at residues 25–269 (PTAKLEHVSE…LQEGLKLVST (245 aa)) is rod. The stretch at 98-144 (AERSAAQHVDMQNSLKQAVDSLSNRLQDLHSLVREEREQRRNDIEHL) forms a coiled coil.

This sequence belongs to the SF-assemblin family.

The protein resides in the cytoplasm. It localises to the cytoskeleton. Its function is as follows. Major component of the striated microtubule-associated fibers (SMAFs; system-I-fibers). The polypeptide is SF-assemblin (Chlamydomonas moewusii (Chlamydomonas eugametos)).